A 204-amino-acid polypeptide reads, in one-letter code: uncharacterized protein (204 aa).

Positions 47–108 (TDSSDDEGGA…EDSDEEGEGG (62 aa)) are disordered. Residues 49-106 (SSDDEGGASSGDEGEASSDDEGDASSDDEEEASSDGEGVVEDEETLDAEGEDSDEEGE) show a composition bias toward acidic residues.

It is found in the mitochondrion. This is an uncharacterized protein from Paramecium tetraurelia.